The following is a 156-amino-acid chain: MSETAERKPILDVVGIQKLLPHRPPFLLVDRVVEFEPNKRVVALKGVTMNEPFFQGHFPAQPVMPGVLILEALAQAAALLATLSMKPEEVNDKITYLMGIDAARFRRPVVPGDRLELEVEVTKQKGAVWKQTGVARVDGQVVAEAEFMAMLADRER.

The active site involves His57.

The protein belongs to the thioester dehydratase family. FabZ subfamily.

The protein resides in the cytoplasm. The catalysed reaction is a (3R)-hydroxyacyl-[ACP] = a (2E)-enoyl-[ACP] + H2O. Its function is as follows. Involved in unsaturated fatty acids biosynthesis. Catalyzes the dehydration of short chain beta-hydroxyacyl-ACPs and long chain saturated and unsaturated beta-hydroxyacyl-ACPs. This Anaeromyxobacter sp. (strain K) protein is 3-hydroxyacyl-[acyl-carrier-protein] dehydratase FabZ.